Consider the following 507-residue polypeptide: Protein adenylyltransferase fic-1 (507 aa).

The helical transmembrane segment at 40-56 threads the bilayer; sequence YSLTTVVLVSLVVTLVC. TPR repeat units lie at residues 146–179 and 180–213; these read AILA…APNN and PQIL…DPGN. The Inhibitory (S/T)XXXE(G/N) motif motif lies at 269-274; the sequence is TVAIEG. Glutamate 273 is an ATP binding site. The Fido domain occupies 325–460; that stretch reads ISIDDILEMH…LRPFVRYVAK (136 aa). At threonine 351 the chain carries O-AMP-threonine; by autocatalysis. 356–359 is a binding site for ATP; it reads VGKF. Residue histidine 403 is part of the active site. ATP-binding positions include 407 to 414, 439 to 440, and asparagine 447; these read DGNGRTAR and YY. Residue threonine 475 is modified to O-AMP-threonine; by autocatalysis. The disordered stretch occupies residues 482–507; that stretch reads NGEEPNLTAEESKVSEKIETECRAGS. Basic and acidic residues predominate over residues 491–507; that stretch reads EESKVSEKIETECRAGS.

Belongs to the fic family. Forms homodimers; homodimerization might be required for adenylyltransferase activity.

It is found in the endoplasmic reticulum membrane. The protein localises to the nucleus membrane. The enzyme catalyses L-tyrosyl-[protein] + ATP = O-(5'-adenylyl)-L-tyrosyl-[protein] + diphosphate. It carries out the reaction L-threonyl-[protein] + ATP = 3-O-(5'-adenylyl)-L-threonyl-[protein] + diphosphate. The catalysed reaction is 3-O-(5'-adenylyl)-L-threonyl-[protein] + H2O = L-threonyl-[protein] + AMP + H(+). The side chain of Glu-273 determines which of the two opposing activities (AMPylase or de-AMPylase) will take place. In response to endoplasmic reticulum stress, mediates de-AMPylase activity. Adenylyltransferase activity is inhibited by the inhibitory helix present at the N-terminus: Glu-273 binds ATP and competes with ATP-binding at Arg-414, thereby preventing adenylyltransferase activity. In unstressed cells, disengagement of Glu-273 promotes adenylyltransferase activity. Activation dissociates ATP-binding from Glu-273, allowing ordered binding of the entire ATP moiety with the alpha-phosphate in an orientation that is productive for accepting an incoming target hydroxyl side chain. In terms of biological role, protein that can both mediate the addition of adenosine 5'-monophosphate (AMP) to specific residues of target proteins (AMPylation), and the removal of the same modification from target proteins (de-AMPylation), depending on the context. The side chain of Glu-273 determines which of the two opposing activities (AMPylase or de-AMPylase) will take place. Adenylyltransferase that mediates the addition of adenosine 5'-monophosphate (AMP) to specific residues of target proteins. In vivo target proteins include the heat-shock 70 family proteins hsp-1 and hsp-3 and the translation elongation factors eef-1A, eef-1G and eef-2. Can AMPylate core histone H3 in vitro. Can also act as a phosphodiesterase by mediating removal of ATP (de-AMPylation) from target proteins. Decreases susceptibility to P.aeruginosa-mediated killing and might therefore play a role in the innate immune response. In Caenorhabditis briggsae, this protein is Protein adenylyltransferase fic-1 (fic-1).